Here is a 187-residue protein sequence, read N- to C-terminus: MDISIINEVFSTLEEKSMNVVSNFEFNLSKISTGRANPQLIKNIKVSYYEELIPLEQISNISVPEPQQLLIKPFDHNITKEIHKSLLLANLDVAIVNEGNQIRLNFPALNTQRRKELVKSLNKFTEQARVSIRLLRQESNKKIKSFKSEISEDDIKKYETKIQTINDSYIEQIDEITKRKERELMEI.

The protein belongs to the RRF family.

The protein localises to the cytoplasm. Its function is as follows. Responsible for the release of ribosomes from messenger RNA at the termination of protein biosynthesis. May increase the efficiency of translation by recycling ribosomes from one round of translation to another. This Mycoplasmopsis pulmonis (strain UAB CTIP) (Mycoplasma pulmonis) protein is Ribosome-recycling factor.